Consider the following 395-residue polypeptide: NAD(P)H-quinone oxidoreductase subunit H, chloroplastic (395 aa).

It belongs to the complex I 49 kDa subunit family. In terms of assembly, NDH is composed of at least 16 different subunits, 5 of which are encoded in the nucleus.

Its subcellular location is the plastid. The protein localises to the chloroplast thylakoid membrane. The enzyme catalyses a plastoquinone + NADH + (n+1) H(+)(in) = a plastoquinol + NAD(+) + n H(+)(out). It carries out the reaction a plastoquinone + NADPH + (n+1) H(+)(in) = a plastoquinol + NADP(+) + n H(+)(out). NDH shuttles electrons from NAD(P)H:plastoquinone, via FMN and iron-sulfur (Fe-S) centers, to quinones in the photosynthetic chain and possibly in a chloroplast respiratory chain. The immediate electron acceptor for the enzyme in this species is believed to be plastoquinone. Couples the redox reaction to proton translocation, and thus conserves the redox energy in a proton gradient. In Staurastrum punctulatum (Green alga), this protein is NAD(P)H-quinone oxidoreductase subunit H, chloroplastic.